The primary structure comprises 201 residues: Transmembrane 4 L6 family member 18 (201 aa).

The Cytoplasmic portion of the chain corresponds to 1–9; the sequence is MGSRKCGSC. A helical membrane pass occupies residues 10 to 30; that stretch reads LSSLLIPLALWSIIVNILLYF. Residues 31 to 49 are Extracellular-facing; sequence PNGQASYASSNKLTNYVWY. A helical membrane pass occupies residues 50 to 70; the sequence is FEGICFSGIMMLVVAAVLLVL. At 71–93 the chain is on the cytoplasmic side; the sequence is ENDNNYKCCQSENCSKKYMTVLS. The helical transmembrane segment at 94-114 threads the bilayer; the sequence is MIFSALGIAFSGYCLVISALG. Residues 115–157 lie on the Extracellular side of the membrane; the sequence is LLQGPYCRTLDGWEYAFEGTAGRFLTDSREWIQCLEPAHVVEW. Residues 158 to 178 traverse the membrane as a helical segment; sequence NIILFSILIALSGLQVIVCLI. At 179–201 the chain is on the cytoplasmic side; that stretch reads RVVIQLSKSLCGTYSVIIQPGII.

The protein belongs to the L6 tetraspanin family.

It localises to the membrane. In Bos taurus (Bovine), this protein is Transmembrane 4 L6 family member 18 (TM4SF18).